A 359-amino-acid chain; its full sequence is Flavonoid 8-O-methyltransferase 1 (359 aa).

Asp223 is a binding site for S-adenosyl-L-methionine. His261 functions as the Proton acceptor in the catalytic mechanism.

This sequence belongs to the class I-like SAM-binding methyltransferase superfamily. Cation-independent O-methyltransferase family. As to expression, expressed in leaves and trichomes, especially in cv. SD and cv. EMX-1, but barely in cv. MC and cv. SW.

It catalyses the reaction an 8-hydroxyflavone + S-adenosyl-L-methionine = an 8-methoxyflavone + S-adenosyl-L-homocysteine + H(+). It carries out the reaction 4',7,8-trihydroxyflavone + S-adenosyl-L-methionine = 4',7-dihydroxy-8-methoxyflavone + S-adenosyl-L-homocysteine + H(+). The enzyme catalyses 7,8-dihydroxyflavone + S-adenosyl-L-methionine = 7-hydroxy-8-methoxyflavone + S-adenosyl-L-homocysteine + H(+). The catalysed reaction is 3',4',7,8-tetrahydroxyflavone + S-adenosyl-L-methionine = 3',4,7-trihydroxy-8-methoxyflavone + S-adenosyl-L-homocysteine + H(+). The protein operates within flavonoid metabolism. With respect to regulation, strongly inhibited by gardenin B (GARD B). Its function is as follows. Cation-independent flavonoid 8-O-methyltransferase involved in the biosynthesis of polymethoxylated flavonoids natural products such as nevadensin and salvigenin, aroma compounds which contribute to the flavor of sweet basil, and exhibit pharmacological activities such as anti-allergic, anti-oxidant, antibacterial, anti-proliferative, and anti-inflammatory effects. Catalyzes S-adenosylmethionine-dependent regioselective 8-O-methylation of flavonoids; mediates likely the conversion of pilosin (PIL) to nevadensin (NEV) and of 8-hydroxysalvigenin (8-OH-SALV) to gardenin B (GARD B). Can also use 3',4',7,8-tetrahydroxyflavone as substrate. Accepts other unnatural O-diphenols including 7,8,4'-trihydroxy-flavone and 7-O-methyl-8-hydroxy-flavone, and, with a lower efficiency, 7,8-dihydroxy-flavone, as substrates. This is Flavonoid 8-O-methyltransferase 1 from Ocimum basilicum (Sweet basil).